A 673-amino-acid chain; its full sequence is UvrABC system protein B (673 aa).

Residues 26-414 (EGLEDGLAHQ…GDEVVDQVVR (389 aa)) enclose the Helicase ATP-binding domain. ATP is bound at residue 39–46 (GVTGSGKT). Residues 92–115 (YYDYYQPEAYVPSSDTFIEKDASI) carry the Beta-hairpin motif. A Helicase C-terminal domain is found at 431–597 (QVDDLLSEIR…GLNKKVVDIL (167 aa)). Positions 633 to 668 (QQKIHELEGQMMQHAQNLEFEEAAQIRDQLHQLREL) constitute a UVR domain.

Belongs to the UvrB family. Forms a heterotetramer with UvrA during the search for lesions. Interacts with UvrC in an incision complex.

Its subcellular location is the cytoplasm. The UvrABC repair system catalyzes the recognition and processing of DNA lesions. A damage recognition complex composed of 2 UvrA and 2 UvrB subunits scans DNA for abnormalities. Upon binding of the UvrA(2)B(2) complex to a putative damaged site, the DNA wraps around one UvrB monomer. DNA wrap is dependent on ATP binding by UvrB and probably causes local melting of the DNA helix, facilitating insertion of UvrB beta-hairpin between the DNA strands. Then UvrB probes one DNA strand for the presence of a lesion. If a lesion is found the UvrA subunits dissociate and the UvrB-DNA preincision complex is formed. This complex is subsequently bound by UvrC and the second UvrB is released. If no lesion is found, the DNA wraps around the other UvrB subunit that will check the other stand for damage. This Salmonella paratyphi A (strain ATCC 9150 / SARB42) protein is UvrABC system protein B.